The sequence spans 169 residues: CRISPR system Cmr subunit Cmr5 (169 aa).

Belongs to the CRISPR system Cmr5 family. Monomer in isolation. Part of the type III-B Cmr ribonucleoprotein (RNP) complex, an elongated RNP with Cmr2 and Cmr3 as the base, with Cmr4 and Cmr5 forming a helical core along the mature crRNA (39 or 45 nt in length), while the complex is capped by Cmr6 and Cmr1. The 5' end of the crRNA is bound to Cmr2 and Cmr3, while Cmr6 and a Cmr1 subunit (Cmr1-1 or Cmr1-2) cap the 3' end of the crRNA. The target RNA lies antiparallel to the crRNA, with its 5' end near Cmr1 and Cmr6 and its 3' end near Cmr2 and Cmr3; major target cleavage occurs nears the junction of Cmr1/Cmr6 and Cmr4/Cmr, with minor cleavage occurring at 6 nt intervals which coincide with the proposed spacing of Cmr4 subunits. Interacts with Cmr4. Interacts with Cmr2, Cmr4 and Cmr6.

Its subcellular location is the cytoplasm. Functionally, CRISPR (clustered regularly interspaced short palindromic repeat), is an adaptive immune system that provides protection against mobile genetic elements (viruses, transposable elements and conjugative plasmids). CRISPR clusters contain sequences complementary to antecedent mobile elements and target invading nucleic acids. CRISPR clusters are transcribed and processed into CRISPR RNA (crRNA), formerly called psiRNA (prokaryotic silencing) in this organism. Part of the Cmr ribonucleoprotein complex which has divalent cation-dependent endoribonuclease activity specific for ssRNA complementary to the crRNA (target NRA), generating 5' hydroxy- and 3' phosphate or 2'-3' cyclic phosphate termini. Cmr4 is probably the subunit that cleaves target RNA. Cmr complex does not cleave ssDNA complementary to the crRNA. Cleavage of invading RNA is guided by the crRNA; substrate cleavage occurs a fixed distance (14 nt) from the 3' end of the crRNA. In vitro reconstitution shows Cmr1-2 and Cmr5 are not absolutely necessary for target cleavage. The protein is CRISPR system Cmr subunit Cmr5 of Pyrococcus furiosus (strain ATCC 43587 / DSM 3638 / JCM 8422 / Vc1).